The primary structure comprises 337 residues: Calcium-binding protein 39-like (337 aa).

Belongs to the Mo25 family. As to quaternary structure, component of a trimeric complex composed of STK11/LKB1, STRAD (STRADA or STRADB) and CAB39/MO25 (CAB39/MO25alpha or CAB39L/MO25beta): the complex tethers STK11/LKB1 in the cytoplasm and stimulates its catalytic activity.

Its function is as follows. Component of a complex that binds and activates STK11/LKB1. In the complex, required to stabilize the interaction between CAB39/MO25 (CAB39/MO25alpha or CAB39L/MO25beta) and STK11/LKB1. The polypeptide is Calcium-binding protein 39-like (Cab39l) (Mus musculus (Mouse)).